We begin with the raw amino-acid sequence, 291 residues long: Lipoyl synthase, mitochondrial (291 aa).

[4Fe-4S] cluster contacts are provided by C45, C50, C56, C71, C75, C78, and S283. Residues 57–272 (WGEGTATFMI…EKIGKELGFR (216 aa)) enclose the Radical SAM core domain.

Belongs to the radical SAM superfamily. Lipoyl synthase family. The cofactor is [4Fe-4S] cluster.

The protein localises to the mitochondrion. The catalysed reaction is [[Fe-S] cluster scaffold protein carrying a second [4Fe-4S](2+) cluster] + N(6)-octanoyl-L-lysyl-[protein] + 2 oxidized [2Fe-2S]-[ferredoxin] + 2 S-adenosyl-L-methionine + 4 H(+) = [[Fe-S] cluster scaffold protein] + N(6)-[(R)-dihydrolipoyl]-L-lysyl-[protein] + 4 Fe(3+) + 2 hydrogen sulfide + 2 5'-deoxyadenosine + 2 L-methionine + 2 reduced [2Fe-2S]-[ferredoxin]. It functions in the pathway protein modification; protein lipoylation via endogenous pathway; protein N(6)-(lipoyl)lysine from octanoyl-[acyl-carrier-protein]: step 2/2. Catalyzes the radical-mediated insertion of two sulfur atoms into the C-6 and C-8 positions of the octanoyl moiety bound to the lipoyl domains of lipoate-dependent enzymes, thereby converting the octanoylated domains into lipoylated derivatives. The protein is Lipoyl synthase, mitochondrial of Nematostella vectensis (Starlet sea anemone).